Reading from the N-terminus, the 225-residue chain is Small ribosomal subunit protein uS5 (225 aa).

The 64-residue stretch at 57-120 (LEEQVLDVKL…AQAKLSLIKV (64 aa)) folds into the S5 DRBM domain.

Belongs to the universal ribosomal protein uS5 family. As to quaternary structure, part of the 30S ribosomal subunit. Contacts protein S4.

In terms of biological role, with S4 and S12 plays an important role in translational accuracy. The sequence is that of Small ribosomal subunit protein uS5 from Methanococcus vannielii (strain ATCC 35089 / DSM 1224 / JCM 13029 / OCM 148 / SB).